The primary structure comprises 278 residues: UPF0758 protein BURPS668_0979 (278 aa).

The disordered stretch occupies residues 1 to 64 (MQYEIVSAGE…ATAAARRGRD (64 aa)). Positions 22 to 59 (AAAPAAPSSAVPSSAALSSAALSSAARPTGAPPATAAA) are enriched in low complexity. The MPN domain maps to 156–278 (LVDSPGAVDD…TFSFAQAGWI (123 aa)). Zn(2+)-binding residues include His227, His229, and Asp240. The JAMM motif signature appears at 227-240 (HNHPSGAVRPSAAD).

Belongs to the UPF0758 family.

The chain is UPF0758 protein BURPS668_0979 from Burkholderia pseudomallei (strain 668).